The chain runs to 431 residues: Probable glucarate dehydratase (431 aa).

Substrate is bound by residues H29, T108, Y153, and K198. K200 (proton acceptor) is an active-site residue. D228 and N276 together coordinate Mg(2+). Substrate is bound by residues 228–230 (DPN), N276, 327–329 (HSN), H356, and R410. Residue H327 is the Proton acceptor of the active site.

Belongs to the mandelate racemase/muconate lactonizing enzyme family. GlucD subfamily. Requires Mg(2+) as cofactor.

It catalyses the reaction D-glucarate = 5-dehydro-4-deoxy-D-glucarate + H2O. Its pathway is carbohydrate acid metabolism; D-glucarate degradation; 2,5-dioxopentanoate from D-glucarate: step 1/2. Catalyzes the dehydration of glucarate to 5-keto-4-deoxy-D-glucarate (5-kdGluc). This Streptomyces coelicolor (strain ATCC BAA-471 / A3(2) / M145) protein is Probable glucarate dehydratase (gudD).